The following is a 354-amino-acid chain: Probable DNA repair protein RAD51 homolog 4 (354 aa).

Residue 115-122 (GNTSCGKT) coordinates ATP.

It belongs to the RecA family. RAD51 subfamily.

It localises to the nucleus. In terms of biological role, involved in the homologous recombination repair (HRR) pathway of double-stranded DNA breaks arising during DNA replication or induced by DNA-damaging agents. This is Probable DNA repair protein RAD51 homolog 4 (rad51d) from Dictyostelium discoideum (Social amoeba).